Here is a 196-residue protein sequence, read N- to C-terminus: Peptidyl-tRNA hydrolase (196 aa).

Tyr18 is a tRNA binding site. Catalysis depends on His23, which acts as the Proton acceptor. TRNA is bound by residues Phe69, Asn71, and Asn117.

It belongs to the PTH family. In terms of assembly, monomer.

Its subcellular location is the cytoplasm. It catalyses the reaction an N-acyl-L-alpha-aminoacyl-tRNA + H2O = an N-acyl-L-amino acid + a tRNA + H(+). Hydrolyzes ribosome-free peptidyl-tRNAs (with 1 or more amino acids incorporated), which drop off the ribosome during protein synthesis, or as a result of ribosome stalling. Its function is as follows. Catalyzes the release of premature peptidyl moieties from peptidyl-tRNA molecules trapped in stalled 50S ribosomal subunits, and thus maintains levels of free tRNAs and 50S ribosomes. The polypeptide is Peptidyl-tRNA hydrolase (Vibrio parahaemolyticus serotype O3:K6 (strain RIMD 2210633)).